Here is a 347-residue protein sequence, read N- to C-terminus: NADH-ubiquinone oxidoreductase chain 2 (347 aa).

10 consecutive transmembrane segments (helical) span residues 3–23, 26–46, 67–87, 96–116, 149–169, 178–198, 200–220, 239–259, 274–294, and 325–345; these read PLIF…TMIS, WLLI…IIMM, SMLL…WTIM, YMMT…FWVP, LNLN…GWGG, IMAY…MYNT, LMML…ALFI, ILTT…PLSG, NMLL…YFYM, and LSPT…MMLI.

This sequence belongs to the complex I subunit 2 family. In terms of assembly, core subunit of respiratory chain NADH dehydrogenase (Complex I) which is composed of 45 different subunits. Interacts with TMEM242.

The protein resides in the mitochondrion inner membrane. The catalysed reaction is a ubiquinone + NADH + 5 H(+)(in) = a ubiquinol + NAD(+) + 4 H(+)(out). In terms of biological role, core subunit of the mitochondrial membrane respiratory chain NADH dehydrogenase (Complex I) which catalyzes electron transfer from NADH through the respiratory chain, using ubiquinone as an electron acceptor. Essential for the catalytic activity and assembly of complex I. The polypeptide is NADH-ubiquinone oxidoreductase chain 2 (Dasypus novemcinctus (Nine-banded armadillo)).